The following is a 168-amino-acid chain: S-ribosylhomocysteine lyase (168 aa).

Fe cation is bound by residues His54, His58, and Cys128.

This sequence belongs to the LuxS family. In terms of assembly, homodimer. Fe cation serves as cofactor.

It carries out the reaction S-(5-deoxy-D-ribos-5-yl)-L-homocysteine = (S)-4,5-dihydroxypentane-2,3-dione + L-homocysteine. Involved in the synthesis of autoinducer 2 (AI-2) which is secreted by bacteria and is used to communicate both the cell density and the metabolic potential of the environment. The regulation of gene expression in response to changes in cell density is called quorum sensing. Catalyzes the transformation of S-ribosylhomocysteine (RHC) to homocysteine (HC) and 4,5-dihydroxy-2,3-pentadione (DPD). The sequence is that of S-ribosylhomocysteine lyase from Neisseria gonorrhoeae (strain ATCC 700825 / FA 1090).